A 204-amino-acid polypeptide reads, in one-letter code: Ribosome maturation factor RimP (204 aa).

The segment at 177–204 (NFDESQFDEIQETEGEEADEAETPITRH) is disordered. Residues 181-198 (SQFDEIQETEGEEADEAE) are compositionally biased toward acidic residues.

It belongs to the RimP family.

It is found in the cytoplasm. Required for maturation of 30S ribosomal subunits. This is Ribosome maturation factor RimP from Cereibacter sphaeroides (strain ATCC 17025 / ATH 2.4.3) (Rhodobacter sphaeroides).